Here is a 143-residue protein sequence, read N- to C-terminus: Large ribosomal subunit protein uL11 (143 aa).

Belongs to the universal ribosomal protein uL11 family. In terms of assembly, part of the ribosomal stalk of the 50S ribosomal subunit. Interacts with L10 and the large rRNA to form the base of the stalk. L10 forms an elongated spine to which L12 dimers bind in a sequential fashion forming a multimeric L10(L12)X complex. In terms of processing, one or more lysine residues are methylated.

Functionally, forms part of the ribosomal stalk which helps the ribosome interact with GTP-bound translation factors. This Pseudomonas syringae pv. tomato (strain ATCC BAA-871 / DC3000) protein is Large ribosomal subunit protein uL11.